The following is a 357-amino-acid chain: Ribosomal RNA small subunit methyltransferase C (357 aa).

It belongs to the methyltransferase superfamily. RsmC family. Monomer.

Its subcellular location is the cytoplasm. It carries out the reaction guanosine(1207) in 16S rRNA + S-adenosyl-L-methionine = N(2)-methylguanosine(1207) in 16S rRNA + S-adenosyl-L-homocysteine + H(+). Functionally, specifically methylates the guanine in position 1207 of 16S rRNA in the 30S particle. The protein is Ribosomal RNA small subunit methyltransferase C of Colwellia psychrerythraea (strain 34H / ATCC BAA-681) (Vibrio psychroerythus).